Reading from the N-terminus, the 139-residue chain is Tetra-peptide repeat homeobox-like protein (139 aa).

Disordered regions lie at residues 1 to 22 (MQDPRHPQGLPLSPGLPKRQRQ) and 78 to 139 (ERWF…QQPQ). Positions 20–79 (QRQDRTIYNWKQQEVLENHFKEEQYPDYDTRQELAEMLNLREYQVQVWFKNRRAKRSRER) form a DNA-binding region, homeobox. The span at 82–139 (QKQLQQLQKHPQQQHPQQQHPQQQLQQQQPQQQPQQQQPQQQPQQQQPQQQQLHQQPQ) shows a compositional bias: low complexity.

The protein belongs to the paired homeobox family.

It is found in the nucleus. Transcription factor required for zygotic genome activation (ZGA), a critical event in early embryonic development during which the developmental control passes from maternally provided mRNAs to the expression of the zygotic genome after fertilization. Protein produced from maternal transcripts that binds and activates expression of key ZGA marker genes, such as NANOGNB, ZSCAN4, DUXB, KLF5 and DPPA3. Binds to regulatory DNA sequences containing a 5'-TAATCC-3' sequence motif. The sequence is that of Tetra-peptide repeat homeobox-like protein from Homo sapiens (Human).